Reading from the N-terminus, the 474-residue chain is Probable periplasmic serine endoprotease DegP-like (474 aa).

Residues 1–25 (MRNLKSVTPLLMAALLWGQSLLAQA) form the signal peptide. Residues histidine 113, aspartate 143, and serine 216 each act as charge relay system in the active site. Substrate contacts are provided by residues 214–216 (GNS) and 271–275 (LGVVI). PDZ domains are found at residues 260–351 (LKAD…VRDG) and 357–463 (KVTI…LRQG).

Belongs to the peptidase S1C family.

It localises to the periplasm. The catalysed reaction is Acts on substrates that are at least partially unfolded. The cleavage site P1 residue is normally between a pair of hydrophobic residues, such as Val-|-Val.. In terms of biological role, might be efficient in the degradation of transiently denatured and unfolded proteins which accumulate in the periplasm following stress conditions. This chain is Probable periplasmic serine endoprotease DegP-like, found in Ectopseudomonas mendocina (strain ymp) (Pseudomonas mendocina).